Reading from the N-terminus, the 301-residue chain is Recombination-associated protein RdgC (301 aa).

It belongs to the RdgC family.

It is found in the cytoplasm. The protein resides in the nucleoid. Functionally, may be involved in recombination. In Stenotrophomonas maltophilia (strain R551-3), this protein is Recombination-associated protein RdgC.